Reading from the N-terminus, the 544-residue chain is CRISPR-associated endodeoxyribonuclease Cas12f2 (544 aa).

The interval 1–195 (MNMSKTTISV…KPNERETRYV (195 aa)) is recognition domain (REC). Residues 196-326 (HISKLESPSK…YLQYTYEAEV (131 aa)) form a wedge domain (WED) region. The tract at residues 327-334 (EANKEYAG) is linker. Residues 335-485 (CLGVDIGCSK…VYVKPDYTSQ (151 aa)) form a ruvC-I region. Residues Asp339 and Glu430 contribute to the active site. Residues 486-520 (TCSSCGADKEKTERPSQAIFRCLNPTCRYYQRDIN) are target nucleic acid-binding (TNB). Zn(2+) is bound by residues Cys487, Cys490, Cys507, and Cys512. Residues 521 to 541 (ADFNAAVNIAKKALNNTEVVT) are ruvC-II. Asp522 is an active-site residue.

The protein belongs to the CRISPR-associated endonuclease Cas12f family. As to quaternary structure, an asymmetric homodimer. Guide RNA is probably required for dimerization. Mg(2+) is required as a cofactor. It depends on Zn(2+) as a cofactor.

Its function is as follows. CRISPR (clustered regularly interspaced short palindromic repeat), is an adaptive immune system that provides protection against mobile genetic elements (viruses, transposable elements and conjugative plasmids). CRISPR clusters contain sequences complementary to antecedent mobile elements and target invading nucleic acids. CRISPR clusters are transcribed and processed into CRISPR RNA (crRNA), which requires a trans-encoded small RNA (tracrRNA), but not this protein (in vitro). Recognizes a short motif in the CRISPR repeat sequences (the 5' PAM or protospacer adjacent motif, TTAT in this organism) to help distinguish self versus nonself, as targets within the CRISPR locus do not have PAMs. Upon expression in E.coli of this protein, a mini CRISPR array and the probable tracrRNA, has dsDNA endonuclease activity. DNA cleavage is centered around positions 21 base pairs 3' of PAM. The mini system does not protect E.coli against transformation by foreign plasmids. The chain is CRISPR-associated endodeoxyribonuclease Cas12f2 from Micrarchaeota archaeon (strain CG1_02_47_40).